Here is a 156-residue protein sequence, read N- to C-terminus: MKLQLIAVGTRMPDWVTRGFEEYQRRFPRDMALELIEIPAGKRGKNADIVRILQKEGEQMLAAIPKGNHIVSLDLPGKNWTTPELATALTKWQLDGRDVSLLIGGPEGLAPACKEAANQSWCLSALTLPHPLVRVVVAESLYRAWSVNTNHPYHRE.

S-adenosyl-L-methionine is bound by residues Leu-73, Gly-104, and 123–128 (LSALTL).

This sequence belongs to the RNA methyltransferase RlmH family. Homodimer.

The protein resides in the cytoplasm. The catalysed reaction is pseudouridine(1915) in 23S rRNA + S-adenosyl-L-methionine = N(3)-methylpseudouridine(1915) in 23S rRNA + S-adenosyl-L-homocysteine + H(+). Its function is as follows. Specifically methylates the pseudouridine at position 1915 (m3Psi1915) in 23S rRNA. The protein is Ribosomal RNA large subunit methyltransferase H of Shewanella baltica (strain OS223).